A 453-amino-acid chain; its full sequence is Ethanolamine ammonia-lyase large subunit (453 aa).

Substrate is bound by residues 160-162 and Asn-193; that span reads RLQ. Adenosylcob(III)alamin is bound by residues Pro-194 and Gln-246. Residue Glu-287 coordinates substrate. Ser-295 contacts adenosylcob(III)alamin. A substrate-binding site is contributed by Asp-362. An adenosylcob(III)alamin-binding site is contributed by Met-401.

The protein belongs to the EutB family. The basic unit is a heterodimer which dimerizes to form tetramers. The heterotetramers trimerize; 6 large subunits form a core ring with 6 small subunits projecting outwards. Adenosylcob(III)alamin is required as a cofactor.

It is found in the bacterial microcompartment. The enzyme catalyses ethanolamine = acetaldehyde + NH4(+). The protein operates within amine and polyamine degradation; ethanolamine degradation. Its function is as follows. Catalyzes the deamination of various vicinal amino-alcohols to oxo compounds. It is spontaneously inactivated by its substrate and reactivated by EutA. May play a role in BMC assembly or maintenance. In terms of biological role, expression of the eut operon allows this bacteria to use ethanolamine (EA) as a carbon, nitrogen and energy source. It relies on cobalamin (vitamin B12) both as a cofactor for the ethanolamine ammonia-lyase activity and to induce the operon. EA enhances bacterial survival in macrophages in a concentration-dependent manner, suggesting it is an important nutrient during infection. This chain is Ethanolamine ammonia-lyase large subunit, found in Salmonella typhimurium (strain LT2 / SGSC1412 / ATCC 700720).